Reading from the N-terminus, the 479-residue chain is MVGKGNECAAARRRFSLRAAAASSSSSSFLPCLLLAAALSAGCCRAHAATARAPRSLLARFPTTKMTSELEKEAGRYVDDSSQAARTNNKITNLQVSFVGHGHDTPADGEGQFADAAYPAKWKPDQDPSTPSLVVAHHLPNGNAPFIDAAYPVKWSPRADGPPKQPATFPASPNGEKAEFTDSAYSVKWSPRSVAPPKAPGIFAQHSNGNKAQFTDAAYPVDWNPRSVAPPTPPAALSSLAHPAAGIHIQRGMLFLMKKLHPGAVLPEGTKLALPHGDHGVAAAAPRFIYKDKGDAVPFDLRAMDAILAMFGILPGSDKAAQVADTLRACSELTAAGGGGEEPRACCATSREAVLDFAASALGTSAPRAVTTLVHGREPRRYVVAADGVARIGGDAVVACHPMPYLYEVYYCHRPADAVALRVDLHAVADVGLGGATAVAVCHVNTTTWDSAYFELLKASRGDAICHYMPQGYVLWLAN.

Residues 1–46 form the signal peptide; that stretch reads MVGKGNECAAARRRFSLRAAAASSSSSSFLPCLLLAAALSAGCCRA. Residues 158-177 are disordered; that stretch reads RADGPPKQPATFPASPNGEK. The region spanning 254 to 479 is the BURP domain; that stretch reads LFLMKKLHPG…PQGYVLWLAN (226 aa). An N-linked (GlcNAc...) asparagine glycan is attached at Asn-445.

In terms of tissue distribution, expressed in stamen.

The chain is BURP domain-containing protein 4 (BURP4) from Oryza sativa subsp. japonica (Rice).